A 595-amino-acid chain; its full sequence is Peptidyl-prolyl cis-trans isomerase CYP65 (595 aa).

In terms of domain architecture, U-box spans 35 to 108; it reads KSLPYYCCAL…GEYHCPVLNK (74 aa). A PPIase cyclophilin-type domain is found at 342–496; that stretch reads KKGYVQFQTT…EEIKIIEASV (155 aa). Disordered stretches follow at residues 503 to 546 and 576 to 595; these read ELDE…GGGG and SKKR…FSSW. The span at 510–525 shows a compositional bias: basic and acidic residues; it reads KEKAEKEKNEDKDIEK. Residues 582–595 show a composition bias toward polar residues; the sequence is TASASTGFKDFSSW.

The protein belongs to the cyclophilin-type PPIase family. PPIL2 subfamily. In terms of tissue distribution, expressed in leaves, flower buds and stems. Lower levels of expression in roots.

It localises to the nucleus. The enzyme catalyses [protein]-peptidylproline (omega=180) = [protein]-peptidylproline (omega=0). It carries out the reaction S-ubiquitinyl-[E2 ubiquitin-conjugating enzyme]-L-cysteine + [acceptor protein]-L-lysine = [E2 ubiquitin-conjugating enzyme]-L-cysteine + N(6)-ubiquitinyl-[acceptor protein]-L-lysine.. It participates in protein modification; protein ubiquitination. May catalyze the cis-trans isomerization of proline imidic peptide bonds in oligopeptides thereby assisting the folding of proteins. May also function as a chaperone, playing a role in intracellular transport of proteins. May also have a protein ubiquitin ligase activity acting as an E3 ubiquitin protein ligase or as a ubiquitin-ubiquitin ligase promoting elongation of ubiquitin chains on proteins. The sequence is that of Peptidyl-prolyl cis-trans isomerase CYP65 (CYP65) from Arabidopsis thaliana (Mouse-ear cress).